The chain runs to 441 residues: MGNVATRKRPGCHHHIGRNEENLDDDEDGPAKKRLRIGEPQAENEYQKLAFKSRLQKLKKCRPHLKRRTYKVEEADPRPPVPRFIVDDYGDYEKPEPTRKEFAIPWFEHLFLPEFPTRSVINEKSFVLERQLGRGSFGVVYCASAIHDSERKFAIKMQEKREIISKRAVLQVKREASIQRLLPSHPFIARTYSTWQTRTHLYSLLQYPTGSTGDLFSVWRQRGSLSEAAIRLIGAELASAIDFLHQNDVIYRDVKLENVVLDQWGHALLIDFGLAKKLKQGSSTGTICGTLQYMSPDVASGGTYSHYVDWWSLGVLLHILLTGIYPYPNSEATHHANLKFIDYSTPIGCSREFANLMDRMLAVSITHRLCSFTVLHAHPFFRSIDFSKLEQKDYTPAAEIGNAEYDTYHKSEDALDDALFKENYDVSCGRNVIFAVLPVFW.

Positions 1-16 (MGNVATRKRPGCHHHI) are enriched in basic residues. Positions 1–41 (MGNVATRKRPGCHHHIGRNEENLDDDEDGPAKKRLRIGEPQ) are disordered. The Protein kinase domain occupies 126–381 (FVLERQLGRG…FTVLHAHPFF (256 aa)). ATP-binding positions include 132-140 (LGRGSFGVV) and Lys156. Asp253 acts as the Proton acceptor in catalysis.

It belongs to the protein kinase superfamily. Ser/Thr protein kinase family.

It carries out the reaction L-seryl-[protein] + ATP = O-phospho-L-seryl-[protein] + ADP + H(+). The catalysed reaction is L-threonyl-[protein] + ATP = O-phospho-L-threonyl-[protein] + ADP + H(+). This Caenorhabditis elegans protein is Putative serine/threonine-protein kinase F31E3.2.